Here is a 505-residue protein sequence, read N- to C-terminus: Activin receptor type-1B (505 aa).

An N-terminal signal peptide occupies residues 1-23; sequence MAESAGASSFFPLVVLLLAGSGG. The Extracellular segment spans residues 24–126; that stretch reads SGPRGIQALL…EHPSMWGPVE (103 aa). N-linked (GlcNAc...) asparagine glycosylation is present at Asn43. The chain crosses the membrane as a helical span at residues 127-149; sequence LVGIIAGPVFLLFLIIIIVFLVI. Over 150–505 the chain is Cytoplasmic; the sequence is NYHQRVYHNR…QLSVQEDVKI (356 aa). The 30-residue stretch at 177 to 206 folds into the GS domain; it reads KTLQDLVYDLSTSGSGSGLPLFVQRTVART. In terms of domain architecture, Protein kinase spans 207–497; it reads IVLQEIIGKG…LRIKKTLSQL (291 aa). ATP is bound by residues 213–221 and Lys234; that span reads IGKGRFGEV. Asp335 functions as the Proton acceptor in the catalytic mechanism. A Phosphotyrosine modification is found at Tyr380.

This sequence belongs to the protein kinase superfamily. TKL Ser/Thr protein kinase family. TGFB receptor subfamily. In terms of assembly, forms an activin receptor complex with activin receptor type-2 (ACVR2A or ACVR2B). Part of a complex consisting of MAGI2/ARIP1, ACVR2A, ACVR1B and SMAD3. Interacts with SMAD2 and SMAD3. Interacts with SMAD7. Interacts with FKBP1A. Interacts with IGSF1. Interacts with CRIPTO. Interacts with TDP2. Interacts with TSC22D1/TSC-22. The cofactor is Mg(2+). Mn(2+) is required as a cofactor. Autophosphorylated. Phosphorylated by activin receptor type-2 (ACVR2A or ACVR2B) in response to activin-binding at serine and threonine residues in the GS domain. Phosphorylation of ACVR1B by activin receptor type-2 regulates association with SMAD7. Post-translationally, ubiquitinated. Level of ubiquitination is regulated by the SMAD7-SMURF1 complex. In terms of processing, ubiquitinated. In terms of tissue distribution, urogenital ridge, testis, ovary, brain and lungs.

The protein resides in the cell membrane. It catalyses the reaction L-threonyl-[receptor-protein] + ATP = O-phospho-L-threonyl-[receptor-protein] + ADP + H(+). The enzyme catalyses L-seryl-[receptor-protein] + ATP = O-phospho-L-seryl-[receptor-protein] + ADP + H(+). With respect to regulation, activin receptor type-2 (ACVR2A or ACVR2B) activates the type-1 receptor through phosphorylation of its regulatory GS domain. Transmembrane serine/threonine kinase activin type-1 receptor forming an activin receptor complex with activin receptor type-2 (ACVR2A or ACVR2B). Transduces the activin signal from the cell surface to the cytoplasm and is thus regulating a many physiological and pathological processes including neuronal differentiation and neuronal survival, hair follicle development and cycling, FSH production by the pituitary gland, wound healing, extracellular matrix production, immunosuppression and carcinogenesis. Activin is also thought to have a paracrine or autocrine role in follicular development in the ovary. Within the receptor complex, type-2 receptors (ACVR2A and/or ACVR2B) act as a primary activin receptors whereas the type-1 receptors like ACVR1B act as downstream transducers of activin signals. Activin binds to type-2 receptor at the plasma membrane and activates its serine-threonine kinase. The activated receptor type-2 then phosphorylates and activates the type-1 receptor such as ACVR1B. Once activated, the type-1 receptor binds and phosphorylates the SMAD proteins SMAD2 and SMAD3, on serine residues of the C-terminal tail. Soon after their association with the activin receptor and subsequent phosphorylation, SMAD2 and SMAD3 are released into the cytoplasm where they interact with the common partner SMAD4. This SMAD complex translocates into the nucleus where it mediates activin-induced transcription. Inhibitory SMAD7, which is recruited to ACVR1B through FKBP1A, can prevent the association of SMAD2 and SMAD3 with the activin receptor complex, thereby blocking the activin signal. Activin signal transduction is also antagonized by the binding to the receptor of inhibin-B via the IGSF1 inhibin coreceptor. ACVR1B also phosphorylates TDP2. This Rattus norvegicus (Rat) protein is Activin receptor type-1B (Acvr1b).